Reading from the N-terminus, the 1186-residue chain is Pumilio homolog 1 (1186 aa).

Position 2 is an N-acetylserine (serine 2). The residue at position 19 (serine 19) is a Phosphoserine. The tract at residues 22 to 73 is disordered; sequence LKHHPQEPANPNMPVVLTSGTGSQAQPQPAANQALAAGTHSSPVPGSIGVAG. Over residues 45-58 the composition is skewed to low complexity; that stretch reads QAQPQPAANQALAA. A phosphoserine mark is found at serine 75, serine 98, and serine 106. Threonine 112 carries the post-translational modification Phosphothreonine. Residues serine 124, serine 159, serine 197, serine 209, and serine 229 each carry the phosphoserine modification. The disordered stretch occupies residues 233-272; that stretch reads SCLRKGGFGPRDADSDENDKGEKKNKGTFDGDKLGDLKEE. Over residues 250-272 the composition is skewed to basic and acidic residues; the sequence is NDKGEKKNKGTFDGDKLGDLKEE. Position 305 is a phosphoserine (serine 305). Over residues 485–502 the composition is skewed to low complexity; the sequence is TNSANQQTTPQAQQGQQQ. Disordered regions lie at residues 485–524 and 613–648; these read TNSA…GQQT and AGTT…FYGN. Polar residues predominate over residues 511-524; the sequence is RPLTPNQNQQGQQT. Phosphothreonine is present on threonine 514. A compositionally biased stretch (low complexity) spans 626 to 639; that stretch reads QQPQPQPQQQPNNN. 2 positions are modified to phosphoserine: serine 709 and serine 714. A disordered region spans residues 742–773; sequence GPVGMPLPSQGPGHSQTPPPSLSSHGSSSSLN. The span at 763–773 shows a compositional bias: low complexity; it reads LSSHGSSSSLN. Arginine 796 is modified (omega-N-methylarginine). Residues serine 806 and serine 822 each carry the phosphoserine modification. The PUM-HD domain maps to 828 to 1168; that stretch reads GRSRLLEDFR…HILAKLEKYY (341 aa). Pumilio repeat units lie at residues 848–883, 884–919, 920–955, 956–991, 992–1027, 1028–1063, 1064–1099, and 1103–1142; these read EIAG…LVFN, EILQ…ALAE, RIRG…EMVR, ELDG…FIID, AFKG…PILE, ELHQ…KIVA, EIRG…VLID, and TMND…IVMH. The segment at 863-867 is adenine-nucleotide binding in RNA target; sequence SRFIQ. The interval 899–903 is uracil-nucleotide binding in RNA target; the sequence is NYVIQ. The interval 935 to 939 is adenine-nucleotide binding in RNA target; the sequence is CRVIQ. The tract at residues 971 to 975 is non-specific-nucleotide binding in RNA target; sequence NHVVQ. Residues 1007 to 1011 are adenine-nucleotide binding in RNA target; that stretch reads CRVIQ. Residues 1043–1047 are uracil-nucleotide binding in RNA target; the sequence is NYVIQ. The tract at residues 1079–1083 is guanine-nucleotide binding in RNA target; sequence SNVVE. The uracil-nucleotide binding in RNA target stretch occupies residues 1122-1126; that stretch reads NYVVQ.

In terms of assembly, recruits the CCR4-POP2-NOT deadenylase leading to translational inhibition and mRNA degradation. In case of viral infection, interacts with DHX58. Interacts with TRIM71 (via NHL repeats) in an RNA-dependent manner. Post-translationally, phosphorylation at Ser-714 promotes RNA-binding activity. Following growth factor stimulation phosphorylated at Ser-714, promoting binding to the 3'-UTR of CDKN1B/p27 mRNA. Expressed in brain, heart, kidney, muscle, intestine and stomach. Not expressed in cerebellum, corpus callosum, caudate nucleus, hippocampus, medulla oblongata and putamen. Expressed in all fetal tissues tested.

The protein localises to the cytoplasm. It localises to the P-body. Its subcellular location is the cytoplasmic granule. Sequence-specific RNA-binding protein that acts as a post-transcriptional repressor by binding the 3'-UTR of mRNA targets. Binds to an RNA consensus sequence, the Pumilio Response Element (PRE), 5'-UGUANAUA-3', that is related to the Nanos Response Element (NRE). Mediates post-transcriptional repression of transcripts via different mechanisms: acts via direct recruitment of the CCR4-POP2-NOT deadenylase leading to translational inhibition and mRNA degradation. Also mediates deadenylation-independent repression by promoting accessibility of miRNAs. Following growth factor stimulation, phosphorylated and binds to the 3'-UTR of CDKN1B/p27 mRNA, inducing a local conformational change that exposes miRNA-binding sites, promoting association of miR-221 and miR-222, efficient suppression of CDKN1B/p27 expression, and rapid entry to the cell cycle. Acts as a post-transcriptional repressor of E2F3 mRNAs by binding to its 3'-UTR and facilitating miRNA regulation. Represses a program of genes necessary to maintain genomic stability such as key mitotic, DNA repair and DNA replication factors. Its ability to repress those target mRNAs is regulated by the lncRNA NORAD (non-coding RNA activated by DNA damage) which, due to its high abundance and multitude of PUMILIO binding sites, is able to sequester a significant fraction of PUM1 and PUM2 in the cytoplasm. Involved in neuronal functions by regulating ATXN1 mRNA levels: acts by binding to the 3'-UTR of ATXN1 transcripts, leading to their down-regulation independently of the miRNA machinery. Plays a role in cytoplasmic sensing of viral infection. In testis, acts as a post-transcriptional regulator of spermatogenesis by binding to the 3'-UTR of mRNAs coding for regulators of p53/TP53. Involved in embryonic stem cell renewal by facilitating the exit from the ground state: acts by targeting mRNAs coding for naive pluripotency transcription factors and accelerates their down-regulation at the onset of differentiation. Binds specifically to miRNA MIR199A precursor, with PUM2, regulates miRNA MIR199A expression at a postranscriptional level. This is Pumilio homolog 1 from Homo sapiens (Human).